Consider the following 169-residue polypeptide: 6,7-dimethyl-8-ribityllumazine synthase (169 aa).

5-amino-6-(D-ribitylamino)uracil is bound by residues Phe24, 58-60, and 82-84; these read ALE and AVI. Residue 87 to 88 participates in (2S)-2-hydroxy-3-oxobutyl phosphate binding; sequence ET. His90 serves as the catalytic Proton donor. Asn115 provides a ligand contact to 5-amino-6-(D-ribitylamino)uracil. Arg129 lines the (2S)-2-hydroxy-3-oxobutyl phosphate pocket.

The protein belongs to the DMRL synthase family.

The catalysed reaction is (2S)-2-hydroxy-3-oxobutyl phosphate + 5-amino-6-(D-ribitylamino)uracil = 6,7-dimethyl-8-(1-D-ribityl)lumazine + phosphate + 2 H2O + H(+). Its pathway is cofactor biosynthesis; riboflavin biosynthesis; riboflavin from 2-hydroxy-3-oxobutyl phosphate and 5-amino-6-(D-ribitylamino)uracil: step 1/2. Its function is as follows. Catalyzes the formation of 6,7-dimethyl-8-ribityllumazine by condensation of 5-amino-6-(D-ribitylamino)uracil with 3,4-dihydroxy-2-butanone 4-phosphate. This is the penultimate step in the biosynthesis of riboflavin. The chain is 6,7-dimethyl-8-ribityllumazine synthase from Burkholderia vietnamiensis (strain G4 / LMG 22486) (Burkholderia cepacia (strain R1808)).